We begin with the raw amino-acid sequence, 490 residues long: Asparagine--tRNA ligase (490 aa).

This sequence belongs to the class-II aminoacyl-tRNA synthetase family. As to quaternary structure, homodimer.

It is found in the cytoplasm. It catalyses the reaction tRNA(Asn) + L-asparagine + ATP = L-asparaginyl-tRNA(Asn) + AMP + diphosphate + H(+). This chain is Asparagine--tRNA ligase, found in Rhodopirellula baltica (strain DSM 10527 / NCIMB 13988 / SH1).